A 335-amino-acid chain; its full sequence is MALRWGIVSAGLISSDFTTMLRMLPRSEHQVVAVAARDLSRAKEFAKKHDIPKAYGSYEELAKDPDVEVAYIGTQHPQHKAAVLLCLTAGKAVLCEKPMGVNAAEVREMVAEARSRGLFFMEAIWTRFFPAVEALRSVLAQGTLGDLRVVRAEFGKNLTHVHRATDWAQAGGGLLDLGIYCLQFISMVFGGQKPEKISAVGRRHETGVDDTVTVILQYPGGVHGSFTCSISAQLSNTVSVSGTKGMAQLLDPCWSPTELVVKGEHKEFPLPPAPGKEFNFTNGMGMSYEAKHVRECLQKGLKESPVIPLVESELLADILEEVRKAIGITFPQDKH.

It belongs to the Gfo/Idh/MocA family. As to quaternary structure, homodimer.

The enzyme catalyses (1R,2R)-1,2-dihydrobenzene-1,2-diol + NADP(+) = catechol + NADPH + H(+). It catalyses the reaction D-xylose + NADP(+) = D-xylono-1,5-lactone + NADPH + H(+). This Bos taurus (Bovine) protein is Trans-1,2-dihydrobenzene-1,2-diol dehydrogenase (DHDH).